Here is a 195-residue protein sequence, read N- to C-terminus: Protein LIGHT-DEPENDENT SHORT HYPOCOTYLS 4 (195 aa).

The segment covering 28–38 (TTTSSSSSSSS) has biased composition (low complexity). Disordered stretches follow at residues 28–51 (TTTS…RYEN) and 162–195 (SQAK…SSPN). In terms of domain architecture, ALOG spans 48-175 (RYENQKRRDW…ARGISYEKKK (128 aa)). Residues 173-177 (KKKRK) carry the Nuclear localization signal motif.

It belongs to the plant homeotic and developmental regulators ALOG protein family. As to expression, induced by NAC054/CUC1 and NAC098/CUC2 in shoot organ boundary cells.

The protein resides in the nucleus. Probable transcription regulator that acts as a developmental regulator by promoting cell growth in response to light. May suppress organ differentiation in the boundary region. The polypeptide is Protein LIGHT-DEPENDENT SHORT HYPOCOTYLS 4 (LSH4) (Arabidopsis thaliana (Mouse-ear cress)).